The following is a 177-amino-acid chain: Transcription termination/antitermination protein NusG (177 aa).

Residues 128 to 156 form the KOW domain; sequence ETVKVIDGPFANFTGSIEEIDYDKSKVKV.

Belongs to the NusG family.

Its function is as follows. Participates in transcription elongation, termination and antitermination. Stimulates RNA polymerase pausing at U107 and U144 in the trp leader. NusG-stimulated pausing is sequence specific. Does not affect trp leader termination. The sequence is that of Transcription termination/antitermination protein NusG from Bacillus subtilis (strain 168).